The chain runs to 128 residues: Large ribosomal subunit protein bL20 (128 aa).

Belongs to the bacterial ribosomal protein bL20 family.

Its function is as follows. Binds directly to 23S ribosomal RNA and is necessary for the in vitro assembly process of the 50S ribosomal subunit. It is not involved in the protein synthesizing functions of that subunit. The sequence is that of Large ribosomal subunit protein bL20 from Anaplasma phagocytophilum (strain HZ).